We begin with the raw amino-acid sequence, 134 residues long: Mini-ribonuclease 3 (134 aa).

Asp23 is a catalytic residue.

It belongs to the MrnC RNase family. Homodimer. Mg(2+) is required as a cofactor.

It localises to the cytoplasm. In terms of biological role, involved in correct processing of both the 5' and 3' ends of 23S rRNA precursor. Processes 30S rRNA precursor transcript even in absence of ribonuclease 3 (Rnc); Rnc processes 30S rRNA into smaller rRNA precursors. In Brevibacillus brevis (strain 47 / JCM 6285 / NBRC 100599), this protein is Mini-ribonuclease 3.